Consider the following 972-residue polypeptide: N-alpha-acetyltransferase 25, NatB auxiliary subunit (972 aa).

TPR repeat units lie at residues 11–44, 45–78, 79–112, and 114–146; these read NDRR…HKDL, HCAK…EPTD, DNSL…VPNS, and EYHS…VPKN.

This sequence belongs to the MDM20/NAA25 family. In terms of assembly, component of the N-terminal acetyltransferase B (NatB) complex which is composed of NAA20 and NAA25.

It localises to the cytoplasm. Non-catalytic subunit of the NatB complex which catalyzes acetylation of the N-terminal methionine residues of peptides beginning with Met-Asp, Met-Glu, Met-Asn and Met-Gln. May play a role in normal cell-cycle progression. This chain is N-alpha-acetyltransferase 25, NatB auxiliary subunit (NAA25), found in Homo sapiens (Human).